We begin with the raw amino-acid sequence, 271 residues long: Shikimate dehydrogenase (NADP(+)) (271 aa).

Residues 19-21 (SLS) and T65 each bind shikimate. The active-site Proton acceptor is the K69. E81 contacts NADP(+). Residues N90 and D105 each coordinate shikimate. NADP(+) is bound by residues 128–132 (GAGGA), 150–155 (NRTIEK), and I211. Shikimate is bound at residue Y213. Residue G234 participates in NADP(+) binding.

Belongs to the shikimate dehydrogenase family. Homodimer.

It carries out the reaction shikimate + NADP(+) = 3-dehydroshikimate + NADPH + H(+). It functions in the pathway metabolic intermediate biosynthesis; chorismate biosynthesis; chorismate from D-erythrose 4-phosphate and phosphoenolpyruvate: step 4/7. In terms of biological role, involved in the biosynthesis of the chorismate, which leads to the biosynthesis of aromatic amino acids. Catalyzes the reversible NADPH linked reduction of 3-dehydroshikimate (DHSA) to yield shikimate (SA). The sequence is that of Shikimate dehydrogenase (NADP(+)) from Pyrococcus furiosus (strain ATCC 43587 / DSM 3638 / JCM 8422 / Vc1).